Consider the following 383-residue polypeptide: Serpin B5 (383 aa).

Residues N106, N133, N176, and N361 are each glycosylated (N-linked (GlcNAc...) asparagine).

Belongs to the serpin family. Ov-serpin subfamily.

It localises to the secreted. The protein resides in the extracellular space. Its function is as follows. May not exhibit serine protease inhibitory activity. The sequence is that of Serpin B5 (serpinb5) from Xenopus laevis (African clawed frog).